The chain runs to 303 residues: Nucleotide-binding protein Dvul_1502 (303 aa).

Residue 23–30 participates in ATP binding; that stretch reads GLSGAGKS. Residue 75-78 participates in GTP binding; that stretch reads DLRE.

Belongs to the RapZ-like family.

Its function is as follows. Displays ATPase and GTPase activities. In Nitratidesulfovibrio vulgaris (strain DP4) (Desulfovibrio vulgaris), this protein is Nucleotide-binding protein Dvul_1502.